Reading from the N-terminus, the 448-residue chain is Putative sodium-coupled neutral amino acid transporter 11 (448 aa).

Residues 1–20 form a disordered region; that stretch reads MESERSCLLSSHDAGKGGSS. Helical transmembrane passes span 22 to 42, 52 to 72, 94 to 114, 143 to 163, 165 to 185, 200 to 220, 246 to 266, 286 to 306, 324 to 344, 346 to 366, and 389 to 409; these read VSSA…IGLP, MGLL…ILLV, IGYI…MISY, FVIA…RDIA, LGKV…TVVV, AWVF…FALI, ISVG…YATF, TFGR…ECFV, SSHV…SLSY, CLGI…MFIF, and MILV…ALFP. N-linked (GlcNAc...) asparagine glycosylation is found at asparagine 425, asparagine 440, and asparagine 444.

It belongs to the amino acid/polyamine transporter 2 family.

It is found in the membrane. In terms of biological role, putative sodium-dependent amino acid/proton antiporter. In Danio rerio (Zebrafish), this protein is Putative sodium-coupled neutral amino acid transporter 11 (slc38a11).